A 320-amino-acid polypeptide reads, in one-letter code: Cytochrome f (320 aa).

An N-terminal signal peptide occupies residues 1 to 35; sequence MQTRNAFSWLKKQITRSISVSLMIYILTRTSISSA. Heme-binding residues include Tyr-36, Cys-56, Cys-59, and His-60. The helical transmembrane segment at 286–306 threads the bilayer; the sequence is AQGLLFFLASVILAQIFLVLK.

The protein belongs to the cytochrome f family. In terms of assembly, the 4 large subunits of the cytochrome b6-f complex are cytochrome b6, subunit IV (17 kDa polypeptide, petD), cytochrome f and the Rieske protein, while the 4 small subunits are PetG, PetL, PetM and PetN. The complex functions as a dimer. Heme serves as cofactor.

It localises to the plastid. The protein localises to the chloroplast thylakoid membrane. Component of the cytochrome b6-f complex, which mediates electron transfer between photosystem II (PSII) and photosystem I (PSI), cyclic electron flow around PSI, and state transitions. The chain is Cytochrome f from Nicotiana tomentosiformis (Tobacco).